Reading from the N-terminus, the 88-residue chain is Small ribosomal subunit protein bS20 (88 aa).

A disordered region spans residues 1 to 25; sequence MANSAQARKRARQAVAQNAHNSSLR.

The protein belongs to the bacterial ribosomal protein bS20 family.

In terms of biological role, binds directly to 16S ribosomal RNA. This is Small ribosomal subunit protein bS20 from Cupriavidus pinatubonensis (strain JMP 134 / LMG 1197) (Cupriavidus necator (strain JMP 134)).